The primary structure comprises 434 residues: Tryptamine hydroxycinnamoyltransferase 2 (434 aa).

Active-site proton acceptor residues include histidine 154 and aspartate 380.

The protein belongs to the plant acyltransferase family.

Hydroxycinnamoyl transferase that catalyzes the transfer of an acyl from p-coumaryol-CoA to tryptamine, to produce coumaroyl tryptamine. Serotonin and tyramine serve as acyl acceptors in vitro. Can use caffeoyl-CoA, and to a lesser extent feruloyl-CoA, as acyl donors. The sequence is that of Tryptamine hydroxycinnamoyltransferase 2 from Oryza sativa subsp. japonica (Rice).